A 433-amino-acid polypeptide reads, in one-letter code: Histidinol dehydrogenase 2 (433 aa).

The NAD(+) site is built by Tyr-130, Gln-192, and Asn-215. Substrate-binding residues include Ser-238, Gln-260, and His-263. Zn(2+)-binding residues include Gln-260 and His-263. Residues Glu-328 and His-329 each act as proton acceptor in the active site. Substrate-binding residues include His-329, Asp-362, Glu-416, and His-421. Asp-362 provides a ligand contact to Zn(2+). His-421 is a binding site for Zn(2+).

The protein belongs to the histidinol dehydrogenase family. Zn(2+) is required as a cofactor.

The enzyme catalyses L-histidinol + 2 NAD(+) + H2O = L-histidine + 2 NADH + 3 H(+). Its pathway is amino-acid biosynthesis; L-histidine biosynthesis; L-histidine from 5-phospho-alpha-D-ribose 1-diphosphate: step 9/9. Its function is as follows. Catalyzes the sequential NAD-dependent oxidations of L-histidinol to L-histidinaldehyde and then to L-histidine. This Nostoc sp. (strain PCC 7120 / SAG 25.82 / UTEX 2576) protein is Histidinol dehydrogenase 2 (hisD2).